We begin with the raw amino-acid sequence, 393 residues long: NAD(P)H-quinone oxidoreductase subunit H, chloroplastic (393 aa).

This sequence belongs to the complex I 49 kDa subunit family. NDH is composed of at least 16 different subunits, 5 of which are encoded in the nucleus.

It is found in the plastid. It localises to the chloroplast thylakoid membrane. The catalysed reaction is a plastoquinone + NADH + (n+1) H(+)(in) = a plastoquinol + NAD(+) + n H(+)(out). The enzyme catalyses a plastoquinone + NADPH + (n+1) H(+)(in) = a plastoquinol + NADP(+) + n H(+)(out). In terms of biological role, NDH shuttles electrons from NAD(P)H:plastoquinone, via FMN and iron-sulfur (Fe-S) centers, to quinones in the photosynthetic chain and possibly in a chloroplast respiratory chain. The immediate electron acceptor for the enzyme in this species is believed to be plastoquinone. Couples the redox reaction to proton translocation, and thus conserves the redox energy in a proton gradient. This is NAD(P)H-quinone oxidoreductase subunit H, chloroplastic from Lotus japonicus (Lotus corniculatus var. japonicus).